A 41-amino-acid chain; its full sequence is Conotoxin Ac4.2 (41 aa).

The propeptide occupies 1 to 11 (FDGRNAAVNER). Pro-13 is modified (4-hydroxyproline). O-linked (HexNAc...) threonine glycans are attached at residues Thr-18 and Thr-20. 4-hydroxyproline is present on residues Pro-29 and Pro-33. Cys-40 carries the post-translational modification Cysteine amide.

The protein belongs to the conotoxin A superfamily. Contains 3 disulfide bonds. As to expression, expressed by the venom duct.

It is found in the secreted. Its function is as follows. Probable neurotoxin with ion channel inhibitor activity. This is Conotoxin Ac4.2 from Conus achatinus (Little frog cone).